Reading from the N-terminus, the 62-residue chain is Photosystem II reaction center protein Z (62 aa).

2 consecutive transmembrane segments (helical) span residues 8–28 (ALVA…VAYA) and 41–61 (WLGS…NFFV).

The protein belongs to the PsbZ family. PSII is composed of 1 copy each of membrane proteins PsbA, PsbB, PsbC, PsbD, PsbE, PsbF, PsbH, PsbI, PsbJ, PsbK, PsbL, PsbM, PsbT, PsbX, PsbY, PsbZ, Psb30/Ycf12, peripheral proteins PsbO, CyanoQ (PsbQ), PsbU, PsbV and a large number of cofactors. It forms dimeric complexes.

It localises to the cellular thylakoid membrane. May control the interaction of photosystem II (PSII) cores with the light-harvesting antenna, regulates electron flow through the 2 photosystem reaction centers. PSII is a light-driven water plastoquinone oxidoreductase, using light energy to abstract electrons from H(2)O, generating a proton gradient subsequently used for ATP formation. The protein is Photosystem II reaction center protein Z of Nostoc sp. (strain PCC 7120 / SAG 25.82 / UTEX 2576).